The following is a 188-amino-acid chain: UPF0200 protein M1627_1244 (188 aa).

ATP is bound at residue 15–22 (GMPGSGKS).

The protein belongs to the UPF0200 family.

The sequence is that of UPF0200 protein M1627_1244 from Saccharolobus islandicus (strain M.16.27) (Sulfolobus islandicus).